Reading from the N-terminus, the 452-residue chain is Maltoporin (452 aa).

Residues 1–25 form the signal peptide; it reads MMITLRKLPLAVAVAAGVMSAQAMA.

Belongs to the porin LamB (TC 1.B.3) family. As to quaternary structure, homotrimer formed of three 18-stranded antiparallel beta-barrels, containing three independent channels.

The protein resides in the cell outer membrane. The enzyme catalyses beta-maltose(in) = beta-maltose(out). In terms of biological role, involved in the transport of maltose and maltodextrins. This is Maltoporin from Salmonella choleraesuis (strain SC-B67).